Here is a 432-residue protein sequence, read N- to C-terminus: Putative D-alanyl-D-alanine carboxypeptidase (432 aa).

The chain crosses the membrane as a helical; Signal-anchor span at residues 7–25; sequence ATVLLTFSLSAFAVEYPVL.

The protein belongs to the peptidase S12 family. YfeW subfamily.

It localises to the cell inner membrane. It carries out the reaction Preferential cleavage: (Ac)2-L-Lys-D-Ala-|-D-Ala. Also transpeptidation of peptidyl-alanyl moieties that are N-acyl substituents of D-alanine.. The polypeptide is Putative D-alanyl-D-alanine carboxypeptidase (Salmonella schwarzengrund (strain CVM19633)).